The sequence spans 290 residues: Type II restriction enzyme MjaIII (290 aa).

This sequence belongs to the DpnII type II restriction endonuclease family.

The enzyme catalyses Endonucleolytic cleavage of DNA to give specific double-stranded fragments with terminal 5'-phosphates.. Functionally, a P subtype restriction enzyme that recognizes the double-stranded sequence 5'-GATC-3'; the cleavage site is unknown. The sequence is that of Type II restriction enzyme MjaIII (mjaIIIR) from Methanocaldococcus jannaschii (strain ATCC 43067 / DSM 2661 / JAL-1 / JCM 10045 / NBRC 100440) (Methanococcus jannaschii).